The chain runs to 390 residues: 3,5-dihydroxybiphenyl synthase (390 aa).

Cys161 is a catalytic residue.

Belongs to the thiolase-like superfamily. Chalcone/stilbene synthases family. As to quaternary structure, homodimer.

It carries out the reaction benzoyl-CoA + 3 malonyl-CoA + 3 H(+) = biphenyl-3,5-diol + 4 CO2 + 4 CoA. Its function is as follows. Type III polyketide synthase involved in the biosynthesis of the phytoalexins bisphenyls and dibenzofurans. Can also use salicoyl-CoA and malonyl-CoA to produce a diketide intermediate yielding 4-hydroxycoumarin after cyclization and enolization. Can also use m-hydroxybenzoyl-CoA as substrate, producing m-hydroxybenzoyl diacetic acid lactone as a derailment product. No activity with p-hydroxybenzoyl-CoA, CoA-linked cinnamic acids or acetyl-CoA. The protein is 3,5-dihydroxybiphenyl synthase (BIS1) of Sorbus aucuparia (European mountain ash).